A 353-amino-acid polypeptide reads, in one-letter code: UPF0283 membrane protein YcjF (353 aa).

The Periplasmic segment spans residues Met-1–Lys-69. The chain crosses the membrane as a helical span at residues Met-70–Thr-90. Residues Met-91–Trp-99 lie on the Cytoplasmic side of the membrane. The chain crosses the membrane as a helical span at residues Val-100 to Val-120. Topologically, residues Thr-121–Ala-212 are periplasmic. The helical transmembrane segment at Glu-213–Trp-233 threads the bilayer. Topologically, residues Arg-234–Lys-353 are cytoplasmic.

Belongs to the UPF0283 family.

It is found in the cell inner membrane. The polypeptide is UPF0283 membrane protein YcjF (ycjF) (Escherichia coli O157:H7).